The chain runs to 52 residues: Dibenzothiophene metabolism operon protein NahQ/DoxH (52 aa).

It functions in the pathway aromatic compound metabolism; naphthalene degradation. Its function is as follows. May be involved in the conversion of 2-hydroxy-4-(2'-oxo-3,5-cyclohexadienyl)-buta-2,4-dienoate to cis-O-hydroxybenzylidenepyruvate. DoxH and DoxJ encode different enzymes that may have interchangeable functions. In Pseudomonas putida (Arthrobacter siderocapsulatus), this protein is Dibenzothiophene metabolism operon protein NahQ/DoxH (nahQ).